Here is a 160-residue protein sequence, read N- to C-terminus: Large ribosomal subunit protein uL30m (160 aa).

Residues 1–34 constitute a mitochondrion transit peptide; that stretch reads MAGVLRSVFQRPPGRLQTVKKGAESLIGTEWIRH. The interval 45–64 is disordered; sequence VFQPRPEDHEKYGGDPQNPH.

The protein belongs to the universal ribosomal protein uL30 family. In terms of assembly, component of the mitochondrial ribosome large subunit (39S) which comprises a 16S rRNA and about 50 distinct proteins.

Its subcellular location is the mitochondrion. This Rattus norvegicus (Rat) protein is Large ribosomal subunit protein uL30m (Mrpl30).